The primary structure comprises 243 residues: Voltage-gated monoatomic cation channel TMEM109 (243 aa).

An N-terminal signal peptide occupies residues 1–33; the sequence is MAGAHSTPLWSRHLLKAVLMVLVALFLVHSASA. At 34–83 the chain is on the lumenal side; that stretch reads QSHREFASPGQQKKETSADILTQIGRSLKEMLDTWLGPETMHVISETLLQ. A helical transmembrane segment spans residues 84 to 104; it reads VMWAISSAISVACFALSGIAA. Residues 105 to 135 lie on the Cytoplasmic side of the membrane; that stretch reads QLLSALGLDGEQLTQGLKLSPSQVQTLLLWG. The chain crosses the membrane as a helical span at residues 136–156; that stretch reads AAALVIYWLLSLLLGLVLALL. The Lumenal segment spans residues 157–185; it reads GRILGGLKLVLFVAGFVALVRSVPDPSTR. The chain crosses the membrane as a helical span at residues 186–205; that stretch reads ALMLLALLTLFALLSRLTGS. Residues 206-243 lie on the Cytoplasmic side of the membrane; it reads RSSGSHLEAKVRGLERQIEELRGRQRRAAKMPRSMEEE.

Homooligomer. Interacts with CRYAB; in the cellular response to DNA damage.

It is found in the nucleus outer membrane. It localises to the endoplasmic reticulum membrane. Its subcellular location is the sarcoplasmic reticulum membrane. It carries out the reaction K(+)(in) = K(+)(out). It catalyses the reaction Ca(2+)(in) = Ca(2+)(out). Functions as a voltage-gated monoatomic cation channel permeable to both potassium and calcium. Plays a role in the cellular response to DNA damage. The polypeptide is Voltage-gated monoatomic cation channel TMEM109 (Mus musculus (Mouse)).